A 310-amino-acid polypeptide reads, in one-letter code: UDP-N-acetylenolpyruvoylglucosamine reductase (310 aa).

In terms of domain architecture, FAD-binding PCMH-type spans 35–199 (VGGPAQALFT…TSARFRGTPA (165 aa)). The active site involves arginine 179. Serine 228 serves as the catalytic Proton donor. Glutamate 298 is an active-site residue.

It belongs to the MurB family. FAD is required as a cofactor.

It is found in the cytoplasm. It carries out the reaction UDP-N-acetyl-alpha-D-muramate + NADP(+) = UDP-N-acetyl-3-O-(1-carboxyvinyl)-alpha-D-glucosamine + NADPH + H(+). It functions in the pathway cell wall biogenesis; peptidoglycan biosynthesis. Its function is as follows. Cell wall formation. The sequence is that of UDP-N-acetylenolpyruvoylglucosamine reductase from Rhodopseudomonas palustris (strain BisB5).